The primary structure comprises 565 residues: Proline--tRNA ligase (565 aa).

It belongs to the class-II aminoacyl-tRNA synthetase family. ProS type 1 subfamily. In terms of assembly, homodimer.

The protein resides in the cytoplasm. The catalysed reaction is tRNA(Pro) + L-proline + ATP = L-prolyl-tRNA(Pro) + AMP + diphosphate. In terms of biological role, catalyzes the attachment of proline to tRNA(Pro) in a two-step reaction: proline is first activated by ATP to form Pro-AMP and then transferred to the acceptor end of tRNA(Pro). As ProRS can inadvertently accommodate and process non-cognate amino acids such as alanine and cysteine, to avoid such errors it has two additional distinct editing activities against alanine. One activity is designated as 'pretransfer' editing and involves the tRNA(Pro)-independent hydrolysis of activated Ala-AMP. The other activity is designated 'posttransfer' editing and involves deacylation of mischarged Ala-tRNA(Pro). The misacylated Cys-tRNA(Pro) is not edited by ProRS. The polypeptide is Proline--tRNA ligase (Campylobacter lari (strain RM2100 / D67 / ATCC BAA-1060)).